We begin with the raw amino-acid sequence, 901 residues long: Protein translocase subunit SecA 1 (901 aa).

ATP contacts are provided by residues Gln87, 105–109 (GEGKT), and Asp500. Positions 847–901 (LNHPESGSWGGEGEGPSSEGAPHLPFKRDGEKVGRNQACPCGSGKKYKQCCGKLS) are disordered. Zn(2+) contacts are provided by Cys885, Cys887, Cys896, and Cys897.

The protein belongs to the SecA family. Monomer and homodimer. Part of the essential Sec protein translocation apparatus which comprises SecA, SecYEG and auxiliary proteins SecDF-YajC and YidC. Requires Zn(2+) as cofactor.

It localises to the cell inner membrane. Its subcellular location is the cytoplasm. The catalysed reaction is ATP + H2O + cellular proteinSide 1 = ADP + phosphate + cellular proteinSide 2.. Functionally, part of the Sec protein translocase complex. Interacts with the SecYEG preprotein conducting channel. Has a central role in coupling the hydrolysis of ATP to the transfer of proteins into and across the cell membrane, serving both as a receptor for the preprotein-SecB complex and as an ATP-driven molecular motor driving the stepwise translocation of polypeptide chains across the membrane. The polypeptide is Protein translocase subunit SecA 1 (Magnetococcus marinus (strain ATCC BAA-1437 / JCM 17883 / MC-1)).